The sequence spans 446 residues: MSSKRQTKGCNVVVIGTQWGDEGKGKVVDWLTDHAQAVVRFQGGHNAGHTLIIGDKKTILRLIPSGIMHKTVICYIGNGVVLSPEALFKEIGELEAAGLDVQSRLKISEATTLILPYHVAIDHAREKKRGEAKIGTTGRGIGPAYEDKVARRALRVQDLFYPEKFSEQLRENLEYHNFMLTNYYGAEPVNYEKTLSEAMSYAERLKPMVMDVSSALYAAEQSGQNLLFEGAQGTLLDIDHGTYPYVTSSNCVAGNAAAGSGVGPDSLQYILGITKAYCTRVGAGPFPSELYDHDNPAKQDLIGIRLAEVGKEFGSVTGRPRRTGWLDAAALKRSIQINSLSGLCITKLDVLDGLETIRLCVGYTLDGKKLDMLPRGAESVARCEPIYEDFPGWKGTTFGIREWDKLPVEAQKFLRRIEEVAGKPIAMVSTGPERDETILLQHPFQD.

GTP is bound by residues 20–26 and 48–50; these read GDEGKGK and GHT. The active-site Proton acceptor is the Asp-21. 2 residues coordinate Mg(2+): Asp-21 and Gly-48. Residues 21 to 24, 46 to 49, Thr-137, Arg-151, Gln-232, Thr-247, and Arg-319 each bind IMP; these read DEGK and NAGH. The active-site Proton donor is the His-49. A substrate-binding site is contributed by 315–321; that stretch reads SVTGRPR. GTP contacts are provided by residues Arg-321, 347–349, and 429–431; these read KLD and STG.

The protein belongs to the adenylosuccinate synthetase family. As to quaternary structure, homodimer. It depends on Mg(2+) as a cofactor.

It is found in the cytoplasm. It carries out the reaction IMP + L-aspartate + GTP = N(6)-(1,2-dicarboxyethyl)-AMP + GDP + phosphate + 2 H(+). It participates in purine metabolism; AMP biosynthesis via de novo pathway; AMP from IMP: step 1/2. Its function is as follows. Plays an important role in the de novo pathway of purine nucleotide biosynthesis. Catalyzes the first committed step in the biosynthesis of AMP from IMP. The polypeptide is Adenylosuccinate synthetase (Polynucleobacter necessarius subsp. necessarius (strain STIR1)).